We begin with the raw amino-acid sequence, 303 residues long: Methionine import ATP-binding protein MetN (303 aa).

Residues Met-1–Gly-222 form the ABC transporter domain. Gly-19–Ser-26 serves as a coordination point for ATP.

This sequence belongs to the ABC transporter superfamily. Methionine importer (TC 3.A.1.24) family. The complex is composed of two ATP-binding proteins (MetN), two transmembrane proteins (MetI) and a solute-binding protein (MetQ).

It is found in the cell inner membrane. The enzyme catalyses L-methionine(out) + ATP + H2O = L-methionine(in) + ADP + phosphate + H(+). It catalyses the reaction D-methionine(out) + ATP + H2O = D-methionine(in) + ADP + phosphate + H(+). Part of the ABC transporter complex MetNIQ involved in methionine import. Responsible for energy coupling to the transport system. This Wolinella succinogenes (strain ATCC 29543 / DSM 1740 / CCUG 13145 / JCM 31913 / LMG 7466 / NCTC 11488 / FDC 602W) (Vibrio succinogenes) protein is Methionine import ATP-binding protein MetN.